The sequence spans 680 residues: Probable inactive DNA (cytosine-5)-methyltransferase DRM3 (680 aa).

The segment at 1 to 24 (MVKVEDDVEGSGINASVGDLRDAA) is disordered. Residues 45-86 (SSSSHVRSQFIGMGFSPMLVDRVLQKHGDRDSDTILEALLSQ) form the UBA 1 domain. The interval 91 to 113 (KSGSESGSLGDLFDSDNEENSSH) is disordered. In terms of domain architecture, UBA 2 spans 194–235 (SLFGVMDKTLHLLQMGFTEEEVSSVIDKAGPEATVLELADTI). The SAM-dependent MTase DRM-type domain maps to 336–663 (IRRNVRSDVA…QRVKHIMGRL (328 aa)).

Belongs to the class I-like SAM-binding methyltransferase superfamily. DRM-methyltransferase family.

The protein localises to the nucleus. Functionally, involved in de novo DNA methylation. Involved in RNA-directed DNA methylation (RdDM). This chain is Probable inactive DNA (cytosine-5)-methyltransferase DRM3, found in Oryza sativa subsp. japonica (Rice).